The primary structure comprises 163 residues: Auxin-responsive protein IAA5 (163 aa).

Residues 15–19 (LRLGL) carry the EAR-like (transcriptional repression) motif. Positions 74 to 160 (SSYVKVSVDG…KRLRIMKRSC (87 aa)) constitute a PB1 domain.

The protein belongs to the Aux/IAA family. In terms of assembly, homodimers and heterodimers. Highly expressed in stems and flowers.

The protein resides in the nucleus. Functionally, aux/IAA proteins are short-lived transcriptional factors that function as repressors of early auxin response genes at low auxin concentrations. Repression is thought to result from the interaction with auxin response factors (ARFs), proteins that bind to the auxin-responsive promoter element (AuxRE). Formation of heterodimers with ARF proteins may alter their ability to modulate early auxin response genes expression. This Arabidopsis thaliana (Mouse-ear cress) protein is Auxin-responsive protein IAA5 (IAA5).